Consider the following 1227-residue polypeptide: Sterol 3-beta-glucosyltransferase (1227 aa).

Disordered regions lie at residues Met-1–Pro-76 and Gln-104–Lys-189. Over residues Lys-48–Thr-57 the composition is skewed to basic and acidic residues. The span at Ala-114 to Asp-135 shows a compositional bias: acidic residues. Over residues Glu-154–Ser-171 the composition is skewed to basic and acidic residues. Basic residues predominate over residues Thr-179–Lys-189. One can recognise a GRAM 1 domain in the interval Ser-188 to Phe-229. Residues Ser-239–Phe-342 enclose the PH domain. Residues Asp-449 to Ser-469 are compositionally biased toward low complexity. Disordered stretches follow at residues Asp-449–Glu-484 and Thr-523–Arg-550. Residues Lys-602 to Gln-668 form the GRAM 2 domain. Residues Ser-786, Arg-787, Asp-789, Asn-1060, Asn-1088, Val-1089, His-1091, His-1104, Ser-1107, Gly-1108, Thr-1109, Asp-1128, and Gln-1129 each contribute to the UDP-alpha-D-glucose site.

This sequence belongs to the glycosyltransferase 28 family.

The protein resides in the cytoplasm. Its subcellular location is the membrane. The catalysed reaction is a sterol + UDP-alpha-D-glucose = a sterol 3-beta-D-glucoside + UDP + H(+). It carries out the reaction ergosterol + UDP-alpha-D-glucose = ergosteryl 3-beta-D-glucoside + UDP + H(+). Its function is as follows. Sterol glycosyltransferase responsible for the glycosylation of ergosterol to form ergosterol-glucoside. This chain is Sterol 3-beta-glucosyltransferase, found in Eremothecium gossypii (strain ATCC 10895 / CBS 109.51 / FGSC 9923 / NRRL Y-1056) (Yeast).